The following is a 1019-amino-acid chain: TOG array regulator of axonemal microtubules protein 2 (1019 aa).

Disordered stretches follow at residues 28–54, 131–158, 249–311, and 991–1019; these read AGPRVLPPGSINSSLPHGEGSLQPEPR, RRLSEGLAASSRASLDPGGGPQGVPLHS, TPSR…AKKP, and SLGGSRKATDRGVAPDSKTTGSSYPFQLD. Over residues 1007 to 1019 the composition is skewed to polar residues; it reads SKTTGSSYPFQLD.

It belongs to the Crescerin family.

The sequence is that of TOG array regulator of axonemal microtubules protein 2 from Homo sapiens (Human).